Reading from the N-terminus, the 965-residue chain is SVPGPMGPSGPRGLPGPPGPGPQGFQGPPGEPGEPGSGPMGPRGPPGPPGKNGDDGEAGKPGRPGERGPPGPQGARGLPGTAGLPGMKGHRGFSGLDGAKGDAGPAGPKGEPGSPGENGAPGQMGPRGLPGERGRPGASGPAGARGNDGATGAAGPPGPTGPAGPPGFPGAVGAKGEAGPQGARGSEGPQGVRGEPGPPGPAGAAGPAGNPGADGQPGAKGANGAPGIAGAPGFPGARGPSGPQGPSGPPGPKGNSGEPGAPGKGDTGAKGEPGPTGIQGPPGPAGEEGKRGARGEPGPTGLPGPPGERGGPGSRGFPGADGAGPKGPAGERGSPGPAGPKGSPGEAGRPGEAGLPGAKGLTGSPGSPGPDGKTGPPGPAGQDGRPGPPGPPGARGQAGVMGFPGPKGAAGEPGKAGERGVPGPPGAVGPAGKDGEAGAQGPPGPAGPAGERGEQGPAGPGFQGLPGPAGPPGEADLGAPGPSGARGERGFPGERGVQGPPGPAGPRGPGLQGMPGERGAAGLPGPKGDRGDAGPKGADGAPGKDGVRGLTGPIGPPGPAGAPGDKGESGPSGPAGPTGARGAPGDRGEPGPPGPAGFAGPPGADGQPGAKGEPGDAGAKGDAGPPGPAGPTGPPGPIGNVGAPGPKGARGSAGPPGATGFPGAAGRVGPPGPSGNAGPPGPPGPVGKEGGKGPRGETGPAGRPGEVGPPGPPGPGEKGSPGADGPAGAPGTPGPQGISGQRGVVGLPGQRGERGFPGLPGPSGEPGKGPPGPMGPPGLAGPPGEGREGSPGAEGSPGRDGSPGPKGDRGETGPSGPPGAPGAPGAPGPVGPAGKSGDRGETGPAGPAGPAGPAGARGPAGPQGPRGDKGETGEQGDRGIKGHRGFSGLQGPAGPPGSPGEQGPSGASGPAGPRGPPGSAGSPGKDGLNGLPGPIGPPGPRGRTGDAGPVGPPGPPGPPGPPGPP.

Residues 1 to 21 (SVPGPMGPSGPRGLPGPPGPG) show a composition bias toward pro residues. Residues 1–965 (SVPGPMGPSG…PGPPGPPGPP (965 aa)) are disordered. Pro-15, Pro-18, Pro-20, Pro-29, Pro-32, Pro-35, Pro-49, Pro-64, Pro-70, Pro-79, and Pro-85 each carry 4-hydroxyproline. Basic and acidic residues predominate over residues 52-66 (NGDDGEAGKPGRPGE). At Lys-88 the chain carries 5-hydroxylysine; alternate. Lys-88 is a glycosylation site (O-linked (Gal...) hydroxylysine; alternate). The residue at position 94 (Ser-94) is a Phosphoserine. Low complexity predominate over residues 102–118 (DAGPAGPKGEPGSPGEN). 4-hydroxyproline is present on residues Pro-112, Pro-115, Pro-121, Pro-130, Pro-136, Pro-157, Pro-166, Pro-169, Pro-196, Pro-199, Pro-211, Pro-217, Pro-226, Pro-232, Pro-235, and Pro-250. Positions 136 to 154 (PGASGPAGARGNDGATGAA) are enriched in low complexity. Residues 156-168 (PPGPTGPAGPPGF) are compositionally biased toward pro residues. The segment covering 202-241 (AGAAGPAGNPGADGQPGAKGANGAPGIAGAPGFPGARGPS) has biased composition (low complexity). 5-hydroxylysine is present on Lys-253. A 4-hydroxyproline mark is found at Pro-259, Pro-262, Pro-273, Pro-282, Pro-297, Pro-303, Pro-312, and Pro-318. Gly residues predominate over residues 307–327 (GERGGPGSRGFPGADGAGPKG). A 5-hydroxylysine modification is found at Lys-326. Residues Pro-335, Pro-344, Pro-350, Pro-356, Pro-365, Pro-368, Pro-377, Pro-386, Pro-392, Pro-404, Pro-413, Pro-422, Pro-425, Pro-443, Pro-460, Pro-466, Pro-472, Pro-480, Pro-492, Pro-501, Pro-509, Pro-515, and Pro-524 each carry the 4-hydroxyproline modification. Residues 359 to 385 (KGLTGSPGSPGPDGKTGPPGPAGQDGR) show a composition bias toward low complexity. Over residues 394–413 (ARGQAGVMGFPGPKGAAGEP) the composition is skewed to low complexity. Residues 472 to 482 (PGEADLGAPGP) show a composition bias toward low complexity. At Lys-536 the chain carries 5-hydroxylysine. Residues Pro-542, Pro-557, and Pro-563 each carry the 4-hydroxyproline modification. Residues 569–583 (SGPSGPAGPTGARGA) show a composition bias toward low complexity. A Phosphoserine modification is found at Ser-572. 8 positions are modified to 4-hydroxyproline: Pro-584, Pro-590, Pro-593, Pro-602, Pro-608, Pro-626, Pro-635, and Pro-644. Residues 596 to 623 (AGFAGPPGADGQPGAKGEPGDAGAKGDA) are compositionally biased toward low complexity. Over residues 625–637 (PPGPAGPTGPPGP) the composition is skewed to pro residues. At Lys-647 the chain carries 5-hydroxylysine. Low complexity predominate over residues 652 to 668 (SAGPPGATGFPGAAGRV). A 4-hydroxyproline mark is found at Pro-656 and Pro-662. A 3-hydroxyproline modification is found at Pro-670. 16 positions are modified to 4-hydroxyproline: Pro-671, Pro-680, Pro-683, Pro-704, Pro-713, Pro-721, Pro-730, Pro-748, Pro-757, Pro-760, Pro-766, Pro-771, Pro-777, Pro-783, Pro-791, and Pro-797. Positions 697 to 706 (ETGPAGRPGE) are enriched in low complexity. A compositionally biased stretch (low complexity) spans 718–730 (KGSPGADGPAGAP). Positions 768–780 (KGPPGPMGPPGLA) are enriched in pro residues. Lys-806 is subject to 5-hydroxylysine. Positions 815–830 (SGPPGAPGAPGAPGPV) are enriched in pro residues. 4-hydroxyproline occurs at positions 818, 821, and 824. Residues 851-865 (AGPAGARGPAGPQGP) are compositionally biased toward low complexity. Over residues 866–880 (RGDKGETGEQGDRGI) the composition is skewed to basic and acidic residues. Lys-869 bears the 5-hydroxylysine mark. Lys-881 is subject to 5-hydroxylysine; alternate. An O-linked (Gal...) hydroxylysine; alternate glycan is attached at Lys-881. 4-hydroxyproline is present on residues Pro-896, Pro-899, Pro-917, and Pro-932. Low complexity predominate over residues 899–932 (PGEQGPSGASGPAGPRGPPGSAGSPGKDGLNGLP). The residue at position 937 (Pro-937) is a 3-hydroxyproline. At Pro-938 the chain carries 4-hydroxyproline. Residues 950–965 (VGPPGPPGPPGPPGPP) show a composition bias toward pro residues. Pro-952 is modified (3-hydroxyproline). Pro-953 carries the 4-hydroxyproline modification. Pro-955 carries the post-translational modification 3-hydroxyproline. Pro-956 bears the 4-hydroxyproline mark. Pro-958 carries the 3-hydroxyproline modification. 4-hydroxyproline is present on residues Pro-959, Pro-962, and Pro-965.

It belongs to the fibrillar collagen family. In terms of assembly, trimers of one alpha 2(I) and two alpha 1(I) chains. In terms of processing, contains mostly 4-hydroxyproline. Proline residues at the third position of the tripeptide repeating unit (G-X-Y) are hydroxylated in some or all of the chains. Post-translationally, contains 3-hydroxyproline at a few sites. This modification occurs on the first proline residue in the sequence motif Gly-Pro-Hyp, where Hyp is 4-hydroxyproline. Lysine residues at the third position of the tripeptide repeating unit (G-X-Y) are 5-hydroxylated in some or all of the chains. In terms of processing, O-glycosylated on hydroxylated lysine residues. The O-linked glycan consists of a Glc-Gal disaccharide. Expressed in bones.

The protein resides in the secreted. It is found in the extracellular space. It localises to the extracellular matrix. Functionally, type I collagen is a member of group I collagen (fibrillar forming collagen). The chain is Collagen alpha-1(I) chain from Scelidotherium sp. (strain SLP-2019) (South American ground sloth).